The following is a 290-amino-acid chain: uncharacterized protein (290 aa).

Disordered stretches follow at residues 1–98 (MLGQ…SRRV) and 209–236 (LSGQ…AATT). Positions 63-76 (KPDRVRPGQRDRIG) are enriched in basic and acidic residues. A compositionally biased stretch (low complexity) spans 87–97 (AGQARAASSRR). Residues 261–281 (CILTALLAVSFHSIGVVIMTS) traverse the membrane as a helical segment.

Its subcellular location is the membrane. This is an uncharacterized protein from Homo sapiens (Human).